The chain runs to 163 residues: Acetolactate synthase isozyme 3 small subunit (163 aa).

An ACT domain is found at 4–78 (ILSVLLENES…DVLRVSELGQ (75 aa)).

Belongs to the acetolactate synthase small subunit family. Dimer of large and small chains.

The catalysed reaction is 2 pyruvate + H(+) = (2S)-2-acetolactate + CO2. The protein operates within amino-acid biosynthesis; L-isoleucine biosynthesis; L-isoleucine from 2-oxobutanoate: step 1/4. Its pathway is amino-acid biosynthesis; L-valine biosynthesis; L-valine from pyruvate: step 1/4. Sensitive to valine inhibition. This Salmonella typhimurium (strain LT2 / SGSC1412 / ATCC 700720) protein is Acetolactate synthase isozyme 3 small subunit (ilvH).